We begin with the raw amino-acid sequence, 226 residues long: MKFAVIQFPGSNCDFDLLWAIRDVMGAEAEFVWHDEKSLAGFDGVLIPGGFSYGDYLRCGAIASFANIMPEIKRLAKEGKPVFGTCNGFQILVESGLLPGVLIRNEGLKFVSKWQVLKVENNQSNFTTEYAKDALINLPIAHGEGQYVADEATLAELKENGQIVFTYADENPNGSVENIAGIINKEGNVLGMMPHPERAMEELLGGADGRKMFASLLKNFLVTVKN.

Positions 2-226 (KFAVIQFPGS…LKNFLVTVKN (225 aa)) constitute a Glutamine amidotransferase type-1 domain. Cys-86 acts as the Nucleophile in catalysis. Active-site residues include His-195 and Glu-197.

In terms of assembly, part of the FGAM synthase complex composed of 1 PurL, 1 PurQ and 2 PurS subunits.

It is found in the cytoplasm. The catalysed reaction is N(2)-formyl-N(1)-(5-phospho-beta-D-ribosyl)glycinamide + L-glutamine + ATP + H2O = 2-formamido-N(1)-(5-O-phospho-beta-D-ribosyl)acetamidine + L-glutamate + ADP + phosphate + H(+). It carries out the reaction L-glutamine + H2O = L-glutamate + NH4(+). The protein operates within purine metabolism; IMP biosynthesis via de novo pathway; 5-amino-1-(5-phospho-D-ribosyl)imidazole from N(2)-formyl-N(1)-(5-phospho-D-ribosyl)glycinamide: step 1/2. Part of the phosphoribosylformylglycinamidine synthase complex involved in the purines biosynthetic pathway. Catalyzes the ATP-dependent conversion of formylglycinamide ribonucleotide (FGAR) and glutamine to yield formylglycinamidine ribonucleotide (FGAM) and glutamate. The FGAM synthase complex is composed of three subunits. PurQ produces an ammonia molecule by converting glutamine to glutamate. PurL transfers the ammonia molecule to FGAR to form FGAM in an ATP-dependent manner. PurS interacts with PurQ and PurL and is thought to assist in the transfer of the ammonia molecule from PurQ to PurL. This is Phosphoribosylformylglycinamidine synthase subunit PurQ from Lactococcus lactis subsp. cremoris (Streptococcus cremoris).